The chain runs to 653 residues: Transcription factor Ken 1 (653 aa).

Positions 35 to 103 (TDLLLICDGK…LYSGQVYVRS (69 aa)) constitute a BTB domain. Disordered stretches follow at residues 126 to 215 (NSDG…DRDR), 234 to 305 (NNHP…SDDA), 429 to 451 (LSNN…PPSA), and 512 to 534 (ELSA…GSGS). The span at 145–157 (NRNTEGITGSSVV) shows a compositional bias: polar residues. Residues 251–272 (GHHHHHHHHHHHRQLHQIKTRS) are compositionally biased toward basic residues. The segment covering 286-299 (SDPVNLSIVKQQQD) has biased composition (polar residues). Low complexity predominate over residues 430-444 (SNNNNSSSNNNNNNN). Residues 520–534 (AGGGGGGSGGNGSGS) show a composition bias toward gly residues. 3 C2H2-type zinc fingers span residues 555 to 577 (YRCE…LRVH), 583 to 606 (FACR…CSVH), and 619 to 641 (YTCC…LSGH).

It is found in the nucleus. Transcription factor required for terminalia development. Negative regulator of the JAK/STAT pathway: represses JAK/STAT-dependent expression of ventral veins lacking (vvl) in the posterior spiracles. The protein is Transcription factor Ken 1 of Culex quinquefasciatus (Southern house mosquito).